The primary structure comprises 151 residues: MARKVIANNKKALFDFHILERLEAGIALSGSEVKAIRAGRVNLKDSFVKIIKGEAFLLNAHISYLETTNPHYKPDERRPRKLLLHRKQIDKLTGSVSTEGMTLVTLSIYFNERNRAKAEIALAKGKNLHDKRETLKKRILDREVKAALKEH.

It belongs to the SmpB family.

Its subcellular location is the cytoplasm. Its function is as follows. Required for rescue of stalled ribosomes mediated by trans-translation. Binds to transfer-messenger RNA (tmRNA), required for stable association of tmRNA with ribosomes. tmRNA and SmpB together mimic tRNA shape, replacing the anticodon stem-loop with SmpB. tmRNA is encoded by the ssrA gene; the 2 termini fold to resemble tRNA(Ala) and it encodes a 'tag peptide', a short internal open reading frame. During trans-translation Ala-aminoacylated tmRNA acts like a tRNA, entering the A-site of stalled ribosomes, displacing the stalled mRNA. The ribosome then switches to translate the ORF on the tmRNA; the nascent peptide is terminated with the 'tag peptide' encoded by the tmRNA and targeted for degradation. The ribosome is freed to recommence translation, which seems to be the essential function of trans-translation. In Wolinella succinogenes (strain ATCC 29543 / DSM 1740 / CCUG 13145 / JCM 31913 / LMG 7466 / NCTC 11488 / FDC 602W) (Vibrio succinogenes), this protein is SsrA-binding protein.